The sequence spans 283 residues: Beta-glucoside operon antiterminator (283 aa).

PRD domains are found at residues 65 to 170 and 171 to 280; these read RIPL…SHMP and EVMR…LQEQ.

It belongs to the transcriptional antiterminator BglG family. In terms of processing, phosphorylated and inactivated by ArbF (EII-Bgl). The degree of phosphorylation is dependent on the presence or absence of beta-glucosides which act as inducers of the operon expression. Addition of inducer result in the rapid dephosphorylation of ArbG.

Its function is as follows. Mediates the positive regulation of the beta-glucoside (arb) operon by functioning as a transcriptional antiterminator. This is an RNA-binding protein that recognizes a specific sequence located just upstream of two termination sites within the operon. The polypeptide is Beta-glucoside operon antiterminator (arbG) (Dickeya chrysanthemi (Pectobacterium chrysanthemi)).